The chain runs to 529 residues: MSKIILYQEDARRALERGMDILAEAVSVTLGPKGRNVVLERKYGAPQIVNDGVTIAKEIELEDHIENTGVALIRQAASKTNDVAGDGTTTATVLAHAMVKQGMKNVAAGANAIALKRGIEKATQFIVTQIAEYARPVEDTRAISQVASISAGNDIETGKMIADAIDKVGREGVISLEEGKSTITELEMTEGMCFEKGFISPYFVTDTERMEVIQDNPYILLTDKKITLVQQELLPTLELISKTSRPLVIIAEDVEKEALATLVVNKLRGIVNVVAVRAPGFGDRRKAMLEDIAILTGGQVISEDAGFSLETLTLDMLGQARRITITKENTTIIAEGNEKDVKSRCEQIRRQIEASDSSYEREKLQERLAKLAGGVAVIKVGAATETEMKDKKLRLEDAINATKAAVEEGIVPGGGSTLTHLANDLKDWAEDNLIEDELIGALIVERSLTSPLRRIIENTGQNSAIIIEQIKESEFNIGYDAAKGEIVDMYDVGIIDPAKVTRSGLQNAASIASMILTTECIVVDKQDEK.

ATP-binding positions include 29-32, 86-90, glycine 414, 480-482, and aspartate 496; these read TLGP, DGTTT, and DAA.

This sequence belongs to the chaperonin (HSP60) family. As to quaternary structure, forms a cylinder of 14 subunits composed of two heptameric rings stacked back-to-back. Interacts with the co-chaperonin GroES.

The protein localises to the plastid. Its subcellular location is the chloroplast. The enzyme catalyses ATP + H2O + a folded polypeptide = ADP + phosphate + an unfolded polypeptide.. Functionally, together with its co-chaperonin GroES, plays an essential role in assisting protein folding. The GroEL-GroES system forms a nano-cage that allows encapsulation of the non-native substrate proteins and provides a physical environment optimized to promote and accelerate protein folding. This Guillardia theta (Cryptophyte) protein is Chaperonin GroEL, chloroplastic.